Reading from the N-terminus, the 329-residue chain is HTH-type transcriptional regulator ArgR (329 aa).

In terms of domain architecture, HTH araC/xylS-type spans 214-312 (TQAVLLMEAN…GVTPREDRNQ (99 aa)). DNA-binding regions (H-T-H motif) lie at residues 231–252 (DEIA…KQYL) and 279–302 (IIQI…RNFF). The interval 307–329 (REDRNQRRGGSAFETTFTPVERG) is disordered. The span at 319–329 (FETTFTPVERG) shows a compositional bias: polar residues.

Functionally, argR could be a transcriptional activator of the dauBAR operon in response to the presence of L-Arg. This is HTH-type transcriptional regulator ArgR (argR) from Pseudomonas aeruginosa (strain ATCC 15692 / DSM 22644 / CIP 104116 / JCM 14847 / LMG 12228 / 1C / PRS 101 / PAO1).